The following is a 268-amino-acid chain: (+)-cis,trans-nepetalactol synthase NEPS2 (268 aa).

NAD(+)-binding positions include 16–22 (GGASGIG), 41–43 (DIQ), 65–66 (DI), N92, 163–167 (YVMSK), and 196–200 (VLTPL).

The protein belongs to the short-chain dehydrogenases/reductases (SDR) family.

The enzyme catalyses (S)-8-oxocitronellyl enol = cis-trans-nepetalactol. In terms of biological role, functions as a non-oxidoreductive cyclase to promote the formation of cis-trans-nepetalactol. Cis-trans-nepetalactol is then oxidized by NEPS1 into cis-trans-nepetalactone, which belongs to a family of metabolites that are both insect-repellent and have euphoric effect in cats. Binds NAD(+) as classical short-chain dehydrogenase/reductase (SDR), but does not utilize it for its redox-neutral cyclase activity. This chain is (+)-cis,trans-nepetalactol synthase NEPS2, found in Nepeta racemosa (Catmint).